Consider the following 152-residue polypeptide: 2-C-methyl-D-erythritol 2,4-cyclodiphosphate synthase (152 aa).

Positions 8 and 10 each coordinate a divalent metal cation. 4-CDP-2-C-methyl-D-erythritol 2-phosphate-binding positions include 8–10 (DSH) and 34–35 (HS). Residue H42 participates in a divalent metal cation binding. Residues 56 to 58 (DIG), 61 to 65 (FPDTD), 100 to 106 (LDRPKLG), and 131 to 135 (FKTSE) contribute to the 4-CDP-2-C-methyl-D-erythritol 2-phosphate site.

This sequence belongs to the IspF family. In terms of assembly, homotrimer. A divalent metal cation is required as a cofactor.

The catalysed reaction is 4-CDP-2-C-methyl-D-erythritol 2-phosphate = 2-C-methyl-D-erythritol 2,4-cyclic diphosphate + CMP. The protein operates within isoprenoid biosynthesis; isopentenyl diphosphate biosynthesis via DXP pathway; isopentenyl diphosphate from 1-deoxy-D-xylulose 5-phosphate: step 4/6. Involved in the biosynthesis of isopentenyl diphosphate (IPP) and dimethylallyl diphosphate (DMAPP), two major building blocks of isoprenoid compounds. Catalyzes the conversion of 4-diphosphocytidyl-2-C-methyl-D-erythritol 2-phosphate (CDP-ME2P) to 2-C-methyl-D-erythritol 2,4-cyclodiphosphate (ME-CPP) with a corresponding release of cytidine 5-monophosphate (CMP). The polypeptide is 2-C-methyl-D-erythritol 2,4-cyclodiphosphate synthase (Thermus thermophilus (strain ATCC 27634 / DSM 579 / HB8)).